We begin with the raw amino-acid sequence, 274 residues long: NADPH-dependent 7-cyano-7-deazaguanine reductase (274 aa).

The tract at residues 1 to 33 (MPKKDALDHLSLGQHTDYPNEYDPKQLQPVPRS) is disordered. 84–86 (IES) lines the substrate pocket. 86 to 87 (SK) contributes to the NADPH binding site. Cysteine 183 serves as the catalytic Thioimide intermediate. Aspartate 190 functions as the Proton donor in the catalytic mechanism. A substrate-binding site is contributed by 222–223 (HE). Residue 250-251 (RG) participates in NADPH binding.

This sequence belongs to the GTP cyclohydrolase I family. QueF type 2 subfamily. In terms of assembly, homodimer.

The protein resides in the cytoplasm. It catalyses the reaction 7-aminomethyl-7-carbaguanine + 2 NADP(+) = 7-cyano-7-deazaguanine + 2 NADPH + 3 H(+). Its pathway is tRNA modification; tRNA-queuosine biosynthesis. Functionally, catalyzes the NADPH-dependent reduction of 7-cyano-7-deazaguanine (preQ0) to 7-aminomethyl-7-deazaguanine (preQ1). This is NADPH-dependent 7-cyano-7-deazaguanine reductase from Idiomarina loihiensis (strain ATCC BAA-735 / DSM 15497 / L2-TR).